Here is a 508-residue protein sequence, read N- to C-terminus: Prenylcysteine oxidase 1 (508 aa).

An N-terminal signal peptide occupies residues 1–31 (MDPAAPGLACSILRLGLGLLLLCSWWYPGSA). Residues asparagine 199, asparagine 291, and asparagine 356 are each glycosylated (N-linked (GlcNAc...) asparagine).

Belongs to the prenylcysteine oxidase family. FAD serves as cofactor.

The protein resides in the lysosome. The enzyme catalyses an S-polyprenyl-L-cysteine + O2 + H2O = a polyprenal + L-cysteine + H2O2. It catalyses the reaction S-(2E,6E)-farnesyl-L-cysteine + O2 + H2O = (2E,6E)-farnesal + L-cysteine + H2O2. It carries out the reaction [(2E,6E,10E)-geranylgeranyl]-L-cysteine + O2 + H2O = (2E,6E,10E)-geranylgeranial + L-cysteine + H2O2. Its function is as follows. Prenylcysteine oxidase that cleaves the thioether bond of prenyl-L-cysteines, such as farnesylcysteine and geranylgeranylcysteine. Only active against free prenylcysteines and not prenylcysteine residues within prenylated proteins or peptides. Involved in the final step in the degradation of prenylated proteins, by degrading prenylcysteines after the protein has been degraded. This Bos taurus (Bovine) protein is Prenylcysteine oxidase 1.